The following is a 155-amino-acid chain: uncharacterized protein (155 aa).

A signal peptide spans 1-30 (MTYNTNTSLSSYAGLSAFALSVFCILWGTA).

This is an uncharacterized protein from Treponema pallidum (strain Nichols).